The chain runs to 142 residues: Putative pre-16S rRNA nuclease (142 aa).

It belongs to the YqgF nuclease family.

The protein localises to the cytoplasm. In terms of biological role, could be a nuclease involved in processing of the 5'-end of pre-16S rRNA. This chain is Putative pre-16S rRNA nuclease, found in Blochmanniella floridana.